Here is a 1010-residue protein sequence, read N- to C-terminus: DENN domain-containing protein 1A (1010 aa).

Residues 13 to 143 enclose the uDENN domain; sequence FEVYIEVNRP…HGHPIPEPGT (131 aa). Residues 160–296 enclose the cDENN domain; sequence ELPSIPENRN…VVSALKNRIR (137 aa). Positions 298 to 375 constitute a dDENN domain; the sequence is MSTTTGDGVA…DGRLDLLNSG (78 aa). The FXDXF motif motif lies at 378–382; it reads FSDVF. Residues 455–554 are disordered; that stretch reads GFSTATEEPL…EATVKEPQST (100 aa). A compositionally biased stretch (basic and acidic residues) spans 472–482; sequence IEKKRGEERRP. Residues 493 to 502 show a composition bias toward basic residues; that stretch reads PRPHVPRRPK. The segment covering 509–524 has biased composition (polar residues); the sequence is SRTTAGSSPDQPQQYR. Residues 538-548 show a composition bias toward basic and acidic residues; the sequence is SPEKDSSEATV. A Clathrin box motif is present at residues 560 to 569; it reads SLLEDIFSNL.

Its subcellular location is the cytoplasmic vesicle. It localises to the clathrin-coated vesicle membrane. It is found in the presynaptic cell membrane. Guanine nucleotide exchange factor (GEF) regulating clathrin-mediated endocytosis through RAB35 activation. Promotes the exchange of GDP to GTP, converting inactive GDP-bound RAB35 into its active GTP-bound form. Regulates clathrin-mediated endocytosis of synaptic vesicles and mediates exit from early endosomes. Binds phosphatidylinositol-phosphates (PtdInsPs), with some preference for PtdIns(3)P. The polypeptide is DENN domain-containing protein 1A (dennd1a) (Xenopus laevis (African clawed frog)).